Reading from the N-terminus, the 183-residue chain is Copper transporter 4 (183 aa).

Residues 1–21 form a disordered region; the sequence is MAMPMPMPPPGPGGDAPPAPT. 2 consecutive transmembrane segments (helical) span residues 56-76 and 115-135; these read VGMYFLCLLLVLALAALAEAL and LAYLVMLAVMSFNAGVLLAAV.

This sequence belongs to the copper transporter (Ctr) (TC 1.A.56) family. SLC31A subfamily.

It localises to the membrane. Its function is as follows. Involved in the transport of copper. This chain is Copper transporter 4 (COPT4), found in Oryza sativa subsp. japonica (Rice).